The sequence spans 106 residues: Large ribosomal subunit protein uL24 (106 aa).

This sequence belongs to the universal ribosomal protein uL24 family. Part of the 50S ribosomal subunit.

Functionally, one of two assembly initiator proteins, it binds directly to the 5'-end of the 23S rRNA, where it nucleates assembly of the 50S subunit. In terms of biological role, one of the proteins that surrounds the polypeptide exit tunnel on the outside of the subunit. The sequence is that of Large ribosomal subunit protein uL24 from Laribacter hongkongensis (strain HLHK9).